The sequence spans 358 residues: Transcription factor PCF6 (358 aa).

The disordered stretch occupies residues 1-29 (MEAAVGDGEGGGGGGGRGKRGRGGGGGEM). Residues 7–16 (DGEGGGGGGG) are compositionally biased toward gly residues. Positions 52 to 110 (GKDRHSKVYTAKGIRDRRVRLSVATAIQFYDLQDRLGFDQPSKAIEWLINAASPAIDTL) constitute a TCP domain. Disordered stretches follow at residues 127–163 (ADAAPTRRRSQQQQQQLSNKSGCSSTSETSKGSDKEV) and 282–308 (ANRGTLQSNSPSNMSGHHHHHHQQQLQ). Composition is skewed to polar residues over residues 143 to 156 (LSNKSGCSSTSETS) and 285 to 296 (GTLQSNSPSNMS).

As to quaternary structure, forms homodimers and heterodimers.

The protein localises to the nucleus. Its function is as follows. Transcription activator. Binds the promoter core sequence 5'-GGNCC-3'. The polypeptide is Transcription factor PCF6 (PCF6) (Oryza sativa subsp. indica (Rice)).